The primary structure comprises 312 residues: Phospholipid phosphatase 3 (312 aa).

Residues 1 to 33 (MQSYKYDKAIVPESKNGGSPALNNNPRKGGSKR) lie on the Cytoplasmic side of the membrane. Ser-19 is subject to Phosphoserine. Residues 34 to 54 (VLLICLDLFCLFMAALPFLII) traverse the membrane as a helical segment. The Extracellular portion of the chain corresponds to 55-85 (ETSTIKPYRRGFYCNDESIKYPLKVSETIND). A helical transmembrane segment spans residues 86 to 106 (AVLCAVGIVIAILRIITGEFY). The Cytoplasmic portion of the chain corresponds to 107-123 (RIYYLKEKSRSTIQNPY). The Dityrosine basolateral targeting motif motif lies at 109 to 110 (YY). Residues 124-144 (VAALYKQVGCFLFGCAISQSF) form a helical membrane-spanning segment. Residues 145 to 194 (TDIAKVSIGRLRPHFLSVCDPDFSQINCSEGYIQNYRCRGEDSKVQEARK) are Extracellular-facing. The tract at residues 149–157 (KVSIGRLRP) is phosphatase sequence motif I. A glycan (N-linked (GlcNAc...) asparagine) is linked at Asn-171. The Integrin-binding motif motif lies at 183-185 (RGE). A helical transmembrane segment spans residues 195–215 (SFFSGHASFSMFTMLYLVLYL). A phosphatase sequence motif II region spans residues 197 to 200 (FSGH). His-200 functions as the Proton donors in the catalytic mechanism. The Cytoplasmic segment spans residues 216–226 (QARFTWRGARL). A helical transmembrane segment spans residues 227–244 (LRPLLQFTLLMMAFYTGL). A phosphatase sequence motif III region spans residues 245-256 (SRVSDYKHHPSD). At 245-258 (SRVSDYKHHPSDVL) the chain is on the extracellular side. The active-site Nucleophile is His-252. Residues 259–279 (AGFAQGALVACCIVFFVSDLF) traverse the membrane as a helical segment. Residues 276–312 (SDLFKTKTTLSLPAPAIRREILSPVDIMDRSNHHNMV) form a mediates interaction with CTNND1 region. Topologically, residues 280 to 312 (KTKTTLSLPAPAIRREILSPVDIMDRSNHHNMV) are cytoplasmic.

This sequence belongs to the PA-phosphatase related phosphoesterase family. Forms functional homodimers and homooligomers that are not required for substrate recognition and catalytic activity. Can also form heterooligomers with other PLPP2 and PLPP3. Interacts with CTNND1; negatively regulates the PLPP3-mediated stabilization of beta-catenin/CTNNB1. Post-translationally, N-glycosylated. Contains high-mannose oligosaccharides. As to expression, detected in epithelial cells of intestinal mucosa, lung, liver and brain.

The protein resides in the cell membrane. It is found in the basolateral cell membrane. Its subcellular location is the endoplasmic reticulum membrane. It localises to the endoplasmic reticulum-Golgi intermediate compartment membrane. The protein localises to the golgi apparatus membrane. The protein resides in the golgi apparatus. It is found in the trans-Golgi network membrane. Its subcellular location is the membrane raft. It catalyses the reaction a 1,2-diacyl-sn-glycero-3-phosphate + H2O = a 1,2-diacyl-sn-glycerol + phosphate. The catalysed reaction is 1,2-dihexadecanoyl-sn-glycero-3-phosphate + H2O = 1,2-dihexadecanoyl-sn-glycerol + phosphate. The enzyme catalyses 1,2-di-(9Z-octadecenoyl)-sn-glycero-3-phosphate + H2O = 1,2-di-(9Z-octadecenoyl)-sn-glycerol + phosphate. It carries out the reaction a monoacyl-sn-glycero-3-phosphate + H2O = a monoacylglycerol + phosphate. It catalyses the reaction (9Z)-octadecenoyl-sn-glycero-3-phosphate + H2O = (9Z-octadecenoyl)-glycerol + phosphate. The catalysed reaction is sphing-4-enine 1-phosphate + H2O = sphing-4-enine + phosphate. The enzyme catalyses an N-acylsphing-4-enine 1-phosphate + H2O = an N-acylsphing-4-enine + phosphate. It carries out the reaction N-(octanoyl)-sphing-4-enine-1-phosphate + H2O = N-octanoylsphing-4-enine + phosphate. It catalyses the reaction N-(9Z-octadecenoyl)-ethanolamine phosphate + H2O = N-(9Z-octadecenoyl) ethanolamine + phosphate. Its pathway is lipid metabolism; phospholipid metabolism. Its activity is regulated as follows. Magnesium-independent phospholipid phosphatase. Insensitive to N-ethylmaleimide. Inhibited by sphingosine, zinc ions and modestly by propanolol. In terms of biological role, magnesium-independent phospholipid phosphatase of the plasma membrane that catalyzes the dephosphorylation of a variety of glycerolipid and sphingolipid phosphate esters including phosphatidate/PA, lysophosphatidate/LPA, diacylglycerol pyrophosphate/DGPP, sphingosine 1-phosphate/S1P and ceramide 1-phosphate/C1P. Also acts on N-oleoyl ethanolamine phosphate/N-(9Z-octadecenoyl)-ethanolamine phosphate, a potential physiological compound. Has both an extracellular and an intracellular phosphatase activity, allowing the hydrolysis and the cellular uptake of these bioactive lipid mediators from the milieu, regulating signal transduction in different cellular processes. Through the dephosphorylation of extracellular sphingosine-1-phosphate and the regulation of its extra- and intracellular availability, plays a role in vascular homeostasis, regulating endothelial cell migration, adhesion, survival, proliferation and the production of pro-inflammatory cytokines. By maintaining the appropriate levels of this lipid in the cerebellum, also ensure its proper development and function. Through its intracellular lipid phosphatase activity may act in early compartments of the secretory pathway, regulating the formation of Golgi to endoplasmic reticulum retrograde transport carriers. Functionally, independently of this phosphatase activity may also function in the Wnt signaling pathway and the stabilization of beta-catenin/CTNNB1, thereby regulating cell proliferation, migration and differentiation in angiogenesis or yet in tumor growth. Also plays a role in integrin-mediated cell-cell adhesion in angiogenesis. The polypeptide is Phospholipid phosphatase 3 (Rattus norvegicus (Rat)).